The sequence spans 272 residues: Cytochrome b-c1 complex subunit Rieske-2, mitochondrial (272 aa).

A mitochondrion-targeting transit peptide spans Met-1 to Phe-60. Residues Ser-61–Arg-109 lie on the Mitochondrial matrix side of the membrane. The helical transmembrane segment at Ala-110–Leu-132 threads the bilayer. The Mitochondrial intermembrane portion of the chain corresponds to Lys-133 to Gly-272. The Rieske domain maps to Ile-182–Leu-270. Cys-215, His-217, Cys-234, and His-237 together coordinate [2Fe-2S] cluster. The cysteines at positions 220 and 236 are disulfide-linked.

Belongs to the Rieske iron-sulfur protein family. As to quaternary structure, component of the ubiquinol-cytochrome c oxidoreductase (cytochrome b-c1 complex, complex III, CIII), a multisubunit enzyme composed of 3 respiratory subunits cytochrome b, cytochrome c1 and Rieske protein, 2 core protein subunits, and several low-molecular weight protein subunits. The complex exists as an obligatory dimer and forms supercomplexes (SCs) in the inner mitochondrial membrane with cytochrome c oxidase (complex IV, CIV). The cofactor is [2Fe-2S] cluster. As to expression, high levels are seen in the flowers while a low level expression is seen in the roots, leaves and stems.

It localises to the mitochondrion inner membrane. The enzyme catalyses a quinol + 2 Fe(III)-[cytochrome c](out) = a quinone + 2 Fe(II)-[cytochrome c](out) + 2 H(+)(out). Component of the ubiquinol-cytochrome c oxidoreductase, a multisubunit transmembrane complex that is part of the mitochondrial electron transport chain which drives oxidative phosphorylation. The respiratory chain contains 3 multisubunit complexes succinate dehydrogenase (complex II, CII), ubiquinol-cytochrome c oxidoreductase (cytochrome b-c1 complex, complex III, CIII) and cytochrome c oxidase (complex IV, CIV), that cooperate to transfer electrons derived from NADH and succinate to molecular oxygen, creating an electrochemical gradient over the inner membrane that drives transmembrane transport and the ATP synthase. The cytochrome b-c1 complex catalyzes electron transfer from ubiquinol to cytochrome c, linking this redox reaction to translocation of protons across the mitochondrial inner membrane, with protons being carried across the membrane as hydrogens on the quinol. In the process called Q cycle, 2 protons are consumed from the matrix, 4 protons are released into the intermembrane space and 2 electrons are passed to cytochrome c. The Rieske protein is a catalytic core subunit containing a [2Fe-2S] iron-sulfur cluster. It cycles between 2 conformational states during catalysis to transfer electrons from the quinol bound in the Q(0) site in cytochrome b to cytochrome c1. The protein is Cytochrome b-c1 complex subunit Rieske-2, mitochondrial of Nicotiana tabacum (Common tobacco).